The sequence spans 149 residues: Transcriptional repressor NrdR (149 aa).

A zinc finger spans residues Cys3–Cys34. The ATP-cone domain occupies Pro49–Ala139.

Belongs to the NrdR family. Requires Zn(2+) as cofactor.

In terms of biological role, negatively regulates transcription of bacterial ribonucleotide reductase nrd genes and operons by binding to NrdR-boxes. The chain is Transcriptional repressor NrdR from Ruthia magnifica subsp. Calyptogena magnifica.